Reading from the N-terminus, the 150-residue chain is Large ribosomal subunit protein uL13 (150 aa).

Belongs to the universal ribosomal protein uL13 family. Part of the 50S ribosomal subunit.

Functionally, this protein is one of the early assembly proteins of the 50S ribosomal subunit, although it is not seen to bind rRNA by itself. It is important during the early stages of 50S assembly. The protein is Large ribosomal subunit protein uL13 of Chlamydia muridarum (strain MoPn / Nigg).